A 153-amino-acid chain; its full sequence is Heavy metal-associated isoprenylated plant protein 25 (153 aa).

One can recognise an HMA domain in the interval 24–88 (LQTVDVRVLI…IIHRTGKRAE (65 aa)). A metal cation-binding residues include Cys-35 and Cys-38. Cys-150 is subject to Cysteine methyl ester. A lipid anchor (S-farnesyl cysteine) is attached at Cys-150. A propeptide spans 151–153 (VVM) (removed in mature form).

The protein belongs to the HIPP family. As to expression, expressed in roots, shoot apical meristem, trichomes and flower buds.

Its subcellular location is the membrane. Heavy-metal-binding protein. Binds cadmium. May be involved in cadmium transport and play a role in cadmium detoxification. The polypeptide is Heavy metal-associated isoprenylated plant protein 25 (Arabidopsis thaliana (Mouse-ear cress)).